The primary structure comprises 959 residues: Glycine dehydrogenase (decarboxylating) (959 aa).

Residue Lys-707 is modified to N6-(pyridoxal phosphate)lysine.

It belongs to the GcvP family. As to quaternary structure, the glycine cleavage system is composed of four proteins: P, T, L and H. Pyridoxal 5'-phosphate serves as cofactor.

It catalyses the reaction N(6)-[(R)-lipoyl]-L-lysyl-[glycine-cleavage complex H protein] + glycine + H(+) = N(6)-[(R)-S(8)-aminomethyldihydrolipoyl]-L-lysyl-[glycine-cleavage complex H protein] + CO2. The glycine cleavage system catalyzes the degradation of glycine. The P protein binds the alpha-amino group of glycine through its pyridoxal phosphate cofactor; CO(2) is released and the remaining methylamine moiety is then transferred to the lipoamide cofactor of the H protein. In Photobacterium profundum (strain SS9), this protein is Glycine dehydrogenase (decarboxylating).